The chain runs to 311 residues: Aspartate carbamoyltransferase catalytic subunit (311 aa).

Carbamoyl phosphate-binding residues include R57 and T58. L-aspartate is bound at residue K86. R107, H135, and Q138 together coordinate carbamoyl phosphate. L-aspartate contacts are provided by R168 and R230. Residues L269 and P270 each contribute to the carbamoyl phosphate site.

It belongs to the aspartate/ornithine carbamoyltransferase superfamily. ATCase family. In terms of assembly, heterooligomer of catalytic and regulatory chains.

The catalysed reaction is carbamoyl phosphate + L-aspartate = N-carbamoyl-L-aspartate + phosphate + H(+). It participates in pyrimidine metabolism; UMP biosynthesis via de novo pathway; (S)-dihydroorotate from bicarbonate: step 2/3. Its function is as follows. Catalyzes the condensation of carbamoyl phosphate and aspartate to form carbamoyl aspartate and inorganic phosphate, the committed step in the de novo pyrimidine nucleotide biosynthesis pathway. This chain is Aspartate carbamoyltransferase catalytic subunit, found in Staphylothermus marinus (strain ATCC 43588 / DSM 3639 / JCM 9404 / F1).